Here is a 288-residue protein sequence, read N- to C-terminus: ATP synthase gamma chain (288 aa).

The protein belongs to the ATPase gamma chain family. As to quaternary structure, F-type ATPases have 2 components, CF(1) - the catalytic core - and CF(0) - the membrane proton channel. CF(1) has five subunits: alpha(3), beta(3), gamma(1), delta(1), epsilon(1). CF(0) has three main subunits: a, b and c.

It is found in the cell inner membrane. Its function is as follows. Produces ATP from ADP in the presence of a proton gradient across the membrane. The gamma chain is believed to be important in regulating ATPase activity and the flow of protons through the CF(0) complex. The polypeptide is ATP synthase gamma chain (Stutzerimonas stutzeri (strain A1501) (Pseudomonas stutzeri)).